The chain runs to 438 residues: MSQANAATKAYSDVFFNASLEDIDPEIFGAIRNELGRQRHEIELIASENIVSRAVLEAQGSILTNKYAEGYPGKRYYGGCQYVDVVEELAIERAKKLFGAEFANVQPNSGSQMNQAVFLALLQPGDTFMGLDLNSGGHLTHGSPVNMSGKWFNVVSYGVRKDDHLLDMDEVARLARENKPKLILAGGTAYSRIWDWKRFREIADEVGAYLMVDMAHIAGLVAGGQHPSPVPHAHVCTTTTHKSLRGPRGGMILTNDADIAKKINSAVFPGLQGGPLMHVIAGKAVAFAEALKPEFKLYAKNVVDNARALAEELKSHGLDIVSGGTDNHLMLVDLRPKNATGKRAEAALGRANITCNKNGIPFDPEKPFVTSGVRLGTPAGTTRGFGVAEFKEIGSLIAEVLDGLKVANSDEGNAAVEQAVKEKVIALTGRFPMYGYQG.

Residues Leu133 and 137 to 139 (GHL) each bind (6S)-5,6,7,8-tetrahydrofolate. Residue Lys242 is modified to N6-(pyridoxal phosphate)lysine.

Belongs to the SHMT family. Homodimer. Pyridoxal 5'-phosphate is required as a cofactor.

It is found in the cytoplasm. The catalysed reaction is (6R)-5,10-methylene-5,6,7,8-tetrahydrofolate + glycine + H2O = (6S)-5,6,7,8-tetrahydrofolate + L-serine. It functions in the pathway one-carbon metabolism; tetrahydrofolate interconversion. Its pathway is amino-acid biosynthesis; glycine biosynthesis; glycine from L-serine: step 1/1. Its function is as follows. Catalyzes the reversible interconversion of serine and glycine with tetrahydrofolate (THF) serving as the one-carbon carrier. This reaction serves as the major source of one-carbon groups required for the biosynthesis of purines, thymidylate, methionine, and other important biomolecules. Also exhibits THF-independent aldolase activity toward beta-hydroxyamino acids, producing glycine and aldehydes, via a retro-aldol mechanism. The protein is Serine hydroxymethyltransferase of Brucella abortus (strain S19).